We begin with the raw amino-acid sequence, 174 residues long: Protein SHI RELATED SEQUENCE 3 (174 aa).

The Zn(2+) site is built by C9, C12, C20, C25, C29, and C36. Residues 9–36 (CEDCGNQAKKDCVYMRCRTCCKSKAFHC) constitute a DNA-binding region (zn(2)-C6 fungal-type; degenerate). Positions 110 to 113 (IGGH) match the Required for homo- and heterodimerization motif.

It belongs to the SHI protein family.

The protein localises to the nucleus. Transcription activator that binds DNA on 5'-ACTCTAC-3' and promotes auxin homeostasis-regulating gene expression (e.g. YUC genes), as well as genes affecting stamen development, cell expansion and timing of flowering. Synergistically with other SHI-related proteins, regulates gynoecium, stamen and leaf development in a dose-dependent manner, controlling apical-basal patterning. Promotes style and stigma formation, and influences vascular development during gynoecium development. May also have a role in the formation and/or maintenance of the shoot apical meristem (SAM). This Arabidopsis thaliana (Mouse-ear cress) protein is Protein SHI RELATED SEQUENCE 3 (SRS3).